The chain runs to 244 residues: MKVAVILPAAGLGTRMGKGTAEKAGTSRKQFMLLEGSPILMHTVRKFAASPRVGEIVIAVRAEDTEWVREVVTQEFPGGRVRVVAGGNSRQESVENALSSLSPDCELVAVHDAVRPFIDLDIMHAVFDEAAETGAAIVGVPAVDTVKQVTRGTTHVRVRATLPREKLVMAQTPQVFRHDLLLRAFQEARKDGFIGTDESSMVERLDVEVSVVPGSDRNIKITKPTDMELAHLFLREEAARSTLS.

This sequence belongs to the IspD/TarI cytidylyltransferase family. IspD subfamily.

It catalyses the reaction 2-C-methyl-D-erythritol 4-phosphate + CTP + H(+) = 4-CDP-2-C-methyl-D-erythritol + diphosphate. It functions in the pathway isoprenoid biosynthesis; isopentenyl diphosphate biosynthesis via DXP pathway; isopentenyl diphosphate from 1-deoxy-D-xylulose 5-phosphate: step 2/6. Its function is as follows. Catalyzes the formation of 4-diphosphocytidyl-2-C-methyl-D-erythritol from CTP and 2-C-methyl-D-erythritol 4-phosphate (MEP). This chain is 2-C-methyl-D-erythritol 4-phosphate cytidylyltransferase, found in Solibacter usitatus (strain Ellin6076).